A 200-amino-acid polypeptide reads, in one-letter code: Pyridoxal 5'-phosphate synthase subunit PdxT (200 aa).

Residue 52 to 54 (GES) participates in L-glutamine binding. Residue Cys84 is the Nucleophile of the active site. L-glutamine-binding positions include Arg115 and 143 to 144 (IR). Residues His179 and Glu181 each act as charge relay system in the active site.

It belongs to the glutaminase PdxT/SNO family. In terms of assembly, in the presence of PdxS, forms a dodecamer of heterodimers. Only shows activity in the heterodimer.

It carries out the reaction aldehydo-D-ribose 5-phosphate + D-glyceraldehyde 3-phosphate + L-glutamine = pyridoxal 5'-phosphate + L-glutamate + phosphate + 3 H2O + H(+). The enzyme catalyses L-glutamine + H2O = L-glutamate + NH4(+). Its pathway is cofactor biosynthesis; pyridoxal 5'-phosphate biosynthesis. Functionally, catalyzes the hydrolysis of glutamine to glutamate and ammonia as part of the biosynthesis of pyridoxal 5'-phosphate. The resulting ammonia molecule is channeled to the active site of PdxS. In Methanosarcina barkeri (strain Fusaro / DSM 804), this protein is Pyridoxal 5'-phosphate synthase subunit PdxT.